Reading from the N-terminus, the 619-residue chain is Chaperone protein HscA homolog (619 aa).

Belongs to the heat shock protein 70 family.

Functionally, chaperone involved in the maturation of iron-sulfur cluster-containing proteins. Has a low intrinsic ATPase activity which is markedly stimulated by HscB. The protein is Chaperone protein HscA homolog of Acinetobacter baumannii (strain ATCC 17978 / DSM 105126 / CIP 53.77 / LMG 1025 / NCDC KC755 / 5377).